Consider the following 345-residue polypeptide: S-adenosylmethionine:tRNA ribosyltransferase-isomerase (345 aa).

It belongs to the QueA family. In terms of assembly, monomer.

The protein localises to the cytoplasm. It carries out the reaction 7-aminomethyl-7-carbaguanosine(34) in tRNA + S-adenosyl-L-methionine = epoxyqueuosine(34) in tRNA + adenine + L-methionine + 2 H(+). It functions in the pathway tRNA modification; tRNA-queuosine biosynthesis. Its function is as follows. Transfers and isomerizes the ribose moiety from AdoMet to the 7-aminomethyl group of 7-deazaguanine (preQ1-tRNA) to give epoxyqueuosine (oQ-tRNA). This is S-adenosylmethionine:tRNA ribosyltransferase-isomerase from Azoarcus sp. (strain BH72).